The following is an 823-amino-acid chain: Axial budding pattern protein 2 (823 aa).

An N-terminal signal peptide occupies residues 1-22; it reads MTQLQISLLLTATISLLHLVVA. Residues 23-508 are Extracellular-facing; the sequence is TPYEAYPIGK…SHNKKAVAIA (486 aa). N-linked (GlcNAc...) asparagine glycans are attached at residues asparagine 41, asparagine 50, asparagine 96, asparagine 117, asparagine 163, asparagine 260, asparagine 266, asparagine 304, asparagine 324, asparagine 359, asparagine 382, asparagine 389, asparagine 403, asparagine 447, asparagine 451, and asparagine 495. A disordered region spans residues 447 to 467; it reads NHSANATSTRSSHHSTSTSSY. Low complexity predominate over residues 449 to 467; sequence SANATSTRSSHHSTSTSSY. The chain crosses the membrane as a helical span at residues 509–529; it reads CGVAIPLGVILVALICFLIFW. Residues 530 to 823 are Cytoplasmic-facing; sequence RRRRENPDDE…DIHGRIPEML (294 aa). Disordered regions lie at residues 539–576 and 596–627; these read ENLP…ASSY and HSAT…QSQS. Composition is skewed to polar residues over residues 552 to 566 and 614 to 626; these read NPAN…TPLN and SGMN…FQSQ. Phosphoserine is present on residues serine 642, serine 673, and serine 676. Disordered stretches follow at residues 700–734 and 751–771; these read PEKE…VTPS and DSQS…SSDD. Residues 709 to 724 show a composition bias toward polar residues; that stretch reads DVTMSSLDPWNSNISP. Positions 760-769 are enriched in low complexity; it reads TPTTMSTSSS.

In terms of assembly, interacts with BEM1, BUD3, BUD4, BUD5, CDC24 and CDC42. In terms of processing, O-glycosylated by PMT4 and N-glycosylated. O-glycosylation increases activity in daughter cells by enhancing stability and promoting localization to the plasma membrane. May also be O-glycosylated by PMT1 and PMT2.

It is found in the cell membrane. Required for haploid cells axial budding pattern. Acts as an anchor to help direct new growth components and/or polarity establishment components like the BUD5 GTP/GDP exchange factor to localize at the cortical axial budding site. Regulates septin organization in late G1 independently of its role in polarity-axis determination. The protein is Axial budding pattern protein 2 (AXL2) of Saccharomyces cerevisiae (strain ATCC 204508 / S288c) (Baker's yeast).